We begin with the raw amino-acid sequence, 174 residues long: Large ribosomal subunit protein uL10 (174 aa).

This sequence belongs to the universal ribosomal protein uL10 family. As to quaternary structure, part of the ribosomal stalk of the 50S ribosomal subunit. The N-terminus interacts with L11 and the large rRNA to form the base of the stalk. The C-terminus forms an elongated spine to which L12 dimers bind in a sequential fashion forming a multimeric L10(L12)X complex.

Forms part of the ribosomal stalk, playing a central role in the interaction of the ribosome with GTP-bound translation factors. This is Large ribosomal subunit protein uL10 from Bordetella petrii (strain ATCC BAA-461 / DSM 12804 / CCUG 43448).